The following is a 297-amino-acid chain: tRNA dimethylallyltransferase (297 aa).

An ATP-binding site is contributed by 8–15; it reads GATASGKS. 10 to 15 contributes to the substrate binding site; it reads TASGKS. Positions 33–36 are interaction with substrate tRNA; it reads DSLS.

Belongs to the IPP transferase family. Monomer. The cofactor is Mg(2+).

It carries out the reaction adenosine(37) in tRNA + dimethylallyl diphosphate = N(6)-dimethylallyladenosine(37) in tRNA + diphosphate. Functionally, catalyzes the transfer of a dimethylallyl group onto the adenine at position 37 in tRNAs that read codons beginning with uridine, leading to the formation of N6-(dimethylallyl)adenosine (i(6)A). This chain is tRNA dimethylallyltransferase, found in Sulfurimonas denitrificans (strain ATCC 33889 / DSM 1251) (Thiomicrospira denitrificans (strain ATCC 33889 / DSM 1251)).